The primary structure comprises 242 residues: Large ribosomal subunit protein uL3 (242 aa).

Glutamine 151 is modified (N5-methylglutamine).

The protein belongs to the universal ribosomal protein uL3 family. As to quaternary structure, part of the 50S ribosomal subunit. Forms a cluster with proteins L14 and L19. Methylated by PrmB.

One of the primary rRNA binding proteins, it binds directly near the 3'-end of the 23S rRNA, where it nucleates assembly of the 50S subunit. The polypeptide is Large ribosomal subunit protein uL3 (Zymomonas mobilis subsp. mobilis (strain ATCC 31821 / ZM4 / CP4)).